The chain runs to 225 residues: Uracil-DNA glycosylase (225 aa).

The Proton acceptor role is filled by Asp-65.

Belongs to the uracil-DNA glycosylase (UDG) superfamily. UNG family.

The protein resides in the cytoplasm. The enzyme catalyses Hydrolyzes single-stranded DNA or mismatched double-stranded DNA and polynucleotides, releasing free uracil.. In terms of biological role, excises uracil residues from the DNA which can arise as a result of misincorporation of dUMP residues by DNA polymerase or due to deamination of cytosine. This chain is Uracil-DNA glycosylase, found in Bacillus cereus (strain G9842).